The sequence spans 290 residues: Festuclavine dehydrogenase easG (290 aa).

Belongs to the fgaFS/easG family.

The enzyme catalyses festuclavine + NAD(+) = 6,8-dimethyl-6,7-didehydroergoline + NADH + H(+). The protein operates within alkaloid biosynthesis; ergot alkaloid biosynthesis. Its function is as follows. Festuclavine dehydrogenase; part of the gene cluster that mediates the biosynthesis of fumiclavanine C, a fungal ergot alkaloid. DmaW catalyzes the first step of ergot alkaloid biosynthesis by condensing dimethylallyl diphosphate (DMAP) and tryptophan to form 4-dimethylallyl-L-tryptophan. The second step is catalyzed by the methyltransferase easF that methylates 4-dimethylallyl-L-tryptophan in the presence of S-adenosyl-L-methionine, resulting in the formation of 4-dimethylallyl-L-abrine. The catalase easC and the FAD-dependent oxidoreductase easE then transform 4-dimethylallyl-L-abrine to chanoclavine-I which is further oxidized by EasD in the presence of NAD(+), resulting in the formation of chanoclavine-I aldehyde. EasA reduces chanoclavine-I aldehyde to dihydrochanoclavine-I aldehyde that spontaneously dehydrates to form 6,8-dimethyl-6,7-didehydroergoline. EasG then catalyzes the reduction of 6,8-dimethyl-6,7-didehydroergoline to form festuclavine. Hydrolysis of festuclavine by easM then leads to the formation of fumigaclavine B which is in turn acetylated by easN to fumigaclavine A. Finally, easL catalyzes the conversion of fumigaclavine A into fumigaclavine C by attaching a dimethylallyl moiety to C-2 of the indole nucleus. This Aspergillus fumigatus (strain ATCC MYA-4609 / CBS 101355 / FGSC A1100 / Af293) (Neosartorya fumigata) protein is Festuclavine dehydrogenase easG.